Here is a 212-residue protein sequence, read N- to C-terminus: Thymidylate kinase (212 aa).

11–18 (GPEGAGKT) is a binding site for ATP.

It belongs to the thymidylate kinase family.

The catalysed reaction is dTMP + ATP = dTDP + ADP. Phosphorylation of dTMP to form dTDP in both de novo and salvage pathways of dTTP synthesis. This is Thymidylate kinase from Streptococcus pneumoniae (strain Hungary19A-6).